The chain runs to 794 residues: MTTIDTLATCTQQNRDAVYTLLRRYFTANRTLLLQSDLREGLLQTEQDCGQSDMLRAFVFRLQEGIFSSPWAYLALRPEIAKWEFMRIHQEHLIPEKLTISEFLKFKETVVKGEATESVLEVDFGPFNRGFPRLKESRSIGQGVIFLNRKLSSEMFSRIEAGHTSLLHFLGVHAIEGQQLMFSNNSHDIHAVRNQLRQALEMLETLDGTTPWIELAPKMNQLGFAPGWGHNANRVAETMNMLMDILEAPSPSALEEFLACIPMISRLLILSPHGYFGQDNVLGLPDTGGQVVYILDQVRALEKEMHDRLQLQGVQVEPKILIVTRLIPDAGDTTCNQRLEKVSGCTNTWILRVPFRKHNGEIIPHWISRFEIWPHLEIFAGDVEREALAELGGHPDLIIGNYSDGNLVATLLSRRLGVTQCNIAHALEKTKYLHSDIYWQENEDKYHFSCQYTADLLAMNSADFIVTSTYQEIAGTREAEGQYESYQAFSMPDLYRVIHGIDLFDPKFNIVSPGANADIYFPYSDPNRRLHSLIPEIESLIFDDATNLPARGYLQDPDKPLIFTMARLDRIKNITGLVELYAASPRLRSLANLVIVGGKIDPQHSSDHEEQEQIHRMHQLMDEHELDQQVRWLGMRLDKNLAGELYRYIADKRGIFVQPALFEAFGLTIIEAMASGLPTFATRYGGPLEIIQNNRSGFHIDPNQGAATADLIADFFEKNLENPQEWERISQGALDRVASRYTWKLYAERMMTLSRIYGFWKFVSGLEREETDRYLNMFYHLQFRPLANRLAHEI.

The GT-B glycosyltransferase stretch occupies residues 263–742; it reads MISRLLILSP…ALDRVASRYT (480 aa).

Belongs to the glycosyltransferase 1 family. Homotetramer.

The catalysed reaction is an NDP-alpha-D-glucose + D-fructose = a ribonucleoside 5'-diphosphate + sucrose + H(+). It catalyses the reaction ADP-alpha-D-glucose + D-fructose = sucrose + ADP + H(+). With respect to regulation, inhibited by GDP over 10 mM and by over 2 mM MgCl(2). In terms of biological role, catalyzes the reversible conversion of sucrose and a nucleotide disphosphate (NDP) into fructose and NDP-glucose; although the reaction is freely reversible in vitro, the physiological reaction seems to be sucrose cleavage. Unlike characterized plant enzymes prefers ADP as a cosubstrate, whereas plants prefer UDP. The KM for sucrose is 8-fold lower in the presence of ADP than UDP. Its preference for ADP over UDP suggests it may directly link sucrose and glycogen metabolism. This Nitrosomonas europaea (strain ATCC 19718 / CIP 103999 / KCTC 2705 / NBRC 14298) protein is Sucrose synthase (ss2).